A 127-amino-acid polypeptide reads, in one-letter code: Large ribosomal subunit protein bL17 (127 aa).

The protein belongs to the bacterial ribosomal protein bL17 family. In terms of assembly, part of the 50S ribosomal subunit. Contacts protein L32.

In Levilactobacillus brevis (strain ATCC 367 / BCRC 12310 / CIP 105137 / JCM 1170 / LMG 11437 / NCIMB 947 / NCTC 947) (Lactobacillus brevis), this protein is Large ribosomal subunit protein bL17.